We begin with the raw amino-acid sequence, 372 residues long: NAD(P)H-quinone oxidoreductase subunit 1 (372 aa).

The next 8 helical transmembrane spans lie at 27–47, 97–117, 128–148, 166–186, 204–224, 266–286, 308–328, and 347–367; these read LIWL…GVLV, LLFT…WLIV, VGVG…GLLM, AAQS…VVMM, ILSW…ICAL, VLSA…PVPV, ATGI…AILL, and FLLP…LAFP.

The protein belongs to the complex I subunit 1 family. NDH-1 is composed of at least 11 different subunits.

The protein resides in the cellular thylakoid membrane. It carries out the reaction a plastoquinone + NADH + (n+1) H(+)(in) = a plastoquinol + NAD(+) + n H(+)(out). The catalysed reaction is a plastoquinone + NADPH + (n+1) H(+)(in) = a plastoquinol + NADP(+) + n H(+)(out). In terms of biological role, NDH-1 shuttles electrons from an unknown electron donor, via FMN and iron-sulfur (Fe-S) centers, to quinones in the respiratory and/or the photosynthetic chain. The immediate electron acceptor for the enzyme in this species is believed to be plastoquinone. Couples the redox reaction to proton translocation, and thus conserves the redox energy in a proton gradient. The protein is NAD(P)H-quinone oxidoreductase subunit 1 of Synechococcus sp. (strain WH7803).